Reading from the N-terminus, the 153-residue chain is Catabolic 3-dehydroquinase (153 aa).

Y24 functions as the Proton acceptor in the catalytic mechanism. Substrate-binding residues include N75, H81, and D88. Catalysis depends on H101, which acts as the Proton donor. Residues V102–S103 and R112 contribute to the substrate site.

This sequence belongs to the type-II 3-dehydroquinase family. In terms of assembly, homododecamer. Adopts a ring-like structure, composed of an arrangement of two hexameric rings stacked on top of one another.

It carries out the reaction 3-dehydroquinate = 3-dehydroshikimate + H2O. The protein operates within aromatic compound metabolism; 3,4-dihydroxybenzoate biosynthesis; 3,4-dihydroxybenzoate from 3-dehydroquinate: step 1/2. Its function is as follows. Is involved in the catabolism of quinate. Allows the utilization of quinate as carbon source via the beta-ketoadipate pathway. The chain is Catabolic 3-dehydroquinase from Emericella nidulans (strain FGSC A4 / ATCC 38163 / CBS 112.46 / NRRL 194 / M139) (Aspergillus nidulans).